A 155-amino-acid polypeptide reads, in one-letter code: Endoribonuclease YbeY (155 aa).

Residues His-116, His-120, and His-126 each coordinate Zn(2+).

It belongs to the endoribonuclease YbeY family. Zn(2+) serves as cofactor.

It is found in the cytoplasm. Functionally, single strand-specific metallo-endoribonuclease involved in late-stage 70S ribosome quality control and in maturation of the 3' terminus of the 16S rRNA. In Colwellia psychrerythraea (strain 34H / ATCC BAA-681) (Vibrio psychroerythus), this protein is Endoribonuclease YbeY.